The chain runs to 122 residues: Alkene monooxygenase system, ferredoxin component (122 aa).

Residues 16-111 enclose the Rieske domain; sequence VDVCAVDDLW…LKVEGGRVLI (96 aa). Positions 55, 57, 75, and 78 each coordinate [2Fe-2S] cluster.

The protein belongs to the bacterial ring-hydroxylating dioxygenase ferredoxin component family. As to quaternary structure, homodimer. The alkene monooxygenase multicomponent enzyme system is composed of an electron transfer component and a monooxygenase component interacting with the effector protein XamoD. The electron transfer component is composed of a ferredoxin reductase (XamoF) and a ferredoxin (XamoC), and the monooxygenase component is formed by a heterohexamer (dimer of heterotrimers) of two alpha subunits (XamoA), two beta subunits (XamoE) and two gamma subunits (XamoB). [2Fe-2S] cluster serves as cofactor.

It localises to the cytoplasm. Its function is as follows. Ferredoxin component of the alkene monooxygenase multicomponent enzyme system which catalyzes the O2- and NADH-dependent epoxidation of short chain (C2 to C6) alkenes to their corresponding epoxides. Functions as an intermediate electron transfer protein. The protein is Alkene monooxygenase system, ferredoxin component of Xanthobacter autotrophicus (strain ATCC BAA-1158 / Py2).